Reading from the N-terminus, the 86-residue chain is Acyl carrier protein (86 aa).

The Carrier domain maps to 5–80 (EEILKKVQSI…EAVEFIIDKI (76 aa)). Residue serine 40 is modified to O-(pantetheine 4'-phosphoryl)serine.

It belongs to the acyl carrier protein (ACP) family. In terms of processing, 4'-phosphopantetheine is transferred from CoA to a specific serine of apo-ACP by AcpS. This modification is essential for activity because fatty acids are bound in thioester linkage to the sulfhydryl of the prosthetic group.

It localises to the plastid. The protein localises to the chloroplast. Its pathway is lipid metabolism; fatty acid biosynthesis. Carrier of the growing fatty acid chain in fatty acid biosynthesis. This chain is Acyl carrier protein, found in Cyanidium caldarium (Red alga).